Consider the following 342-residue polypeptide: UDP-3-O-acylglucosamine N-acyltransferase (342 aa).

The active-site Proton acceptor is the H243.

It belongs to the transferase hexapeptide repeat family. LpxD subfamily. Homotrimer.

It carries out the reaction a UDP-3-O-[(3R)-3-hydroxyacyl]-alpha-D-glucosamine + a (3R)-hydroxyacyl-[ACP] = a UDP-2-N,3-O-bis[(3R)-3-hydroxyacyl]-alpha-D-glucosamine + holo-[ACP] + H(+). It functions in the pathway bacterial outer membrane biogenesis; LPS lipid A biosynthesis. Functionally, catalyzes the N-acylation of UDP-3-O-acylglucosamine using 3-hydroxyacyl-ACP as the acyl donor. Is involved in the biosynthesis of lipid A, a phosphorylated glycolipid that anchors the lipopolysaccharide to the outer membrane of the cell. The polypeptide is UDP-3-O-acylglucosamine N-acyltransferase (Coxiella burnetii (strain CbuK_Q154) (Coxiella burnetii (strain Q154))).